We begin with the raw amino-acid sequence, 320 residues long: Nucleoporin Nup37 (320 aa).

4 WD repeats span residues 67–113 (KEQR…FTSL), 118–157 (GHGDYVNDVSWVCDGELLASVSDDFTCRFWTTTGGGENVI), 160–200 (GLSS…TVIS), and 203–242 (SPKFPLMSADWAHSNRLFITSLAGGDVVTWDLNRPYVPAD).

It is found in the nucleus. Its subcellular location is the nuclear pore complex. Functionally, as part of the nuclear pore complex (NPC), has a role in its assembly and function. (Microbial infection) Required for optimal replication of E.chaffeensis. The polypeptide is Nucleoporin Nup37 (Drosophila melanogaster (Fruit fly)).